A 601-amino-acid chain; its full sequence is Kelch repeat and BTB domain-containing protein 8 (601 aa).

Residues threonine 48 to glutamate 116 enclose the BTB domain. One can recognise a BACK domain in the interval cysteine 151–proline 253. Kelch repeat units follow at residues aspartate 336–glycine 390, lysine 391–aspartate 441, isoleucine 443–asparagine 481, cysteine 482–leucine 529, and glutamine 542–valine 588.

It belongs to the KBTBD8 family. Component of the BCR(KBTBD8) E3 ubiquitin ligase complex.

Its subcellular location is the cytoplasm. The protein localises to the cytoskeleton. The protein resides in the spindle. It localises to the golgi apparatus. Functionally, substrate-specific adapter of a BCR (BTB-CUL3-RBX1) E3 ubiquitin ligase complex that acts as a regulator of neural crest specification. The BCR(KBTBD8) complex acts by mediating monoubiquitination of target proteins. The protein is Kelch repeat and BTB domain-containing protein 8 (kbtbd8) of Danio rerio (Zebrafish).